The chain runs to 84 residues: Large ribosomal subunit protein bL27 (84 aa).

The segment at 1-20 (MAHKKSGGASRNGRDSNPKY) is disordered.

Belongs to the bacterial ribosomal protein bL27 family.

The protein is Large ribosomal subunit protein bL27 of Dictyoglomus thermophilum (strain ATCC 35947 / DSM 3960 / H-6-12).